Consider the following 195-residue polypeptide: Probable septum site-determining protein MinC (195 aa).

Belongs to the MinC family. As to quaternary structure, interacts with MinD and FtsZ.

Cell division inhibitor that blocks the formation of polar Z ring septums. Rapidly oscillates between the poles of the cell to destabilize FtsZ filaments that have formed before they mature into polar Z rings. Prevents FtsZ polymerization. The chain is Probable septum site-determining protein MinC from Helicobacter pylori (strain G27).